A 505-amino-acid chain; its full sequence is Glutamate--tRNA ligase (505 aa).

A 'HIGH' region motif is present at residues 12–22 (PSPTGALHIGG). Residues 260–264 (KLSKR) carry the 'KMSKS' region motif. An ATP-binding site is contributed by lysine 263.

The protein belongs to the class-I aminoacyl-tRNA synthetase family. Glutamate--tRNA ligase type 1 subfamily. As to quaternary structure, monomer.

Its subcellular location is the cytoplasm. It carries out the reaction tRNA(Glu) + L-glutamate + ATP = L-glutamyl-tRNA(Glu) + AMP + diphosphate. Catalyzes the attachment of glutamate to tRNA(Glu) in a two-step reaction: glutamate is first activated by ATP to form Glu-AMP and then transferred to the acceptor end of tRNA(Glu). The sequence is that of Glutamate--tRNA ligase from Bacteroides fragilis (strain ATCC 25285 / DSM 2151 / CCUG 4856 / JCM 11019 / LMG 10263 / NCTC 9343 / Onslow / VPI 2553 / EN-2).